A 35-amino-acid polypeptide reads, in one-letter code: Photosystem II reaction center protein T (35 aa).

A helical transmembrane segment spans residues alanine 3–phenylalanine 23.

It belongs to the PsbT family. In terms of assembly, PSII is composed of 1 copy each of membrane proteins PsbA, PsbB, PsbC, PsbD, PsbE, PsbF, PsbH, PsbI, PsbJ, PsbK, PsbL, PsbM, PsbT, PsbY, PsbZ, Psb30/Ycf12, at least 3 peripheral proteins of the oxygen-evolving complex and a large number of cofactors. It forms dimeric complexes.

The protein resides in the plastid. It is found in the chloroplast thylakoid membrane. Its function is as follows. Found at the monomer-monomer interface of the photosystem II (PS II) dimer, plays a role in assembly and dimerization of PSII. PSII is a light-driven water plastoquinone oxidoreductase, using light energy to abstract electrons from H(2)O, generating a proton gradient subsequently used for ATP formation. This chain is Photosystem II reaction center protein T, found in Chara vulgaris (Common stonewort).